We begin with the raw amino-acid sequence, 918 residues long: Cell cycle and apoptosis regulator protein 2 (918 aa).

Residues 1–35 are disordered; sequence MSQFKRQRINPLPGGRNFSGTASTSLLGPPPGLLT. Threonine 35 is modified (phosphothreonine). Lysine 112 is modified (N6-acetyllysine; by KAT8). At lysine 123 the chain carries N6-methyllysine. Serine 124 bears the Phosphoserine mark. 3 disordered regions span residues 179–219, 446–510, and 568–637; these read NRFP…KPRH, KAAE…PAVI, and VSPP…ASED. Residue arginine 180 is modified to Omega-N-methylarginine. At lysine 215 the chain carries N6-acetyllysine; by KAT8. 2 stretches are compositionally biased toward low complexity: residues 447–468 and 482–492; these read AAEA…EQAP and AETPEATTQQE. Threonine 454 is modified (phosphothreonine; by ATM, ATR and CK2). Position 484 is a phosphothreonine (threonine 484). Phosphoserine is present on serine 569. A compositionally biased stretch (basic and acidic residues) spans 572-597; it reads EPEKEEAAKEEEAIKEEVVKEPKDEA. Lysine 586 participates in a covalent cross-link: Glycyl lysine isopeptide (Lys-Gly) (interchain with G-Cter in SUMO2 and SUMO3); alternate. Lysine 586 participates in a covalent cross-link: Glycyl lysine isopeptide (Lys-Gly) (interchain with G-Cter in SUMO2); alternate. Positions 605-665 are interaction with MCC; sequence ESEAPLKEDG…EEFAGAKLED (61 aa). Residues serine 622, serine 670, serine 673, serine 676, serine 682, and serine 803 each carry the phosphoserine modification. Positions 699 to 918 are interaction with NR1D1; it reads DCLLAFVFFD…VEKEEPAPSN (220 aa). A coiled-coil region spans residues 824 to 904; sequence LENRIHTLEL…QLEIQRVVEK (81 aa). Threonine 892 carries the post-translational modification Phosphothreonine.

In terms of assembly, component of the DBIRD complex. Interacts with ZNF326/ZIRD; the interaction is direct. Interacts (via N-terminus) with SIRT1, which inhibits the deacetylation of substrates. Interacts (via N-terminus) with SUV39H1; this interaction abolishes the interaction with SIRT1. Component of a nuclear receptor-mediated transcription complex composed of at least ZNF335, CCAR2 and EMSY; the complex stimulates the transcription of nuclear receptor target genes such as SOX9 and HOXA1. Within the complex interacts with EMSY and interacts with ZNF335 (via C-terminus). Components of this complex may associate with components of a histone methylation complex to form a complex at least composed of ZNF335, HCFC1, CCAR2, EMSY, MKI67, RBBP5, ASH2L and WDR5. Within this complex, interacts with ASH2L. Interacts with NR1D1. Interacts (via N-terminus) with ESR1 and ESR2. Interacts (via N-terminus) with HDAC3 (via C-terminus). Interacts with HDAC1 and MED2F. Interacts with MCC. Interacts (via N-terminus) with NR1H2 and NR1H3 in a ligand-independent manner. Interacts with CSNK2A1. Interacts (via N-terminus) with p53/TP53. Interacts (via N-terminus) with BRCA1 (via the BRCT domains). Interacts (via N-terminus) with CHEK2 (via protein kinase domain). Interacts with PSEM3. Interacts (via N-terminus) with PSIA3 and SENP1. The sumoylated form shows a preferential interaction with SIRT1 as compared to its unmodified form. Interacts with CECR2; may form part of the CERF-1 and/or CEF-5 ISWI chromatin remodeling complexes in embryonic stem cells. In terms of processing, ATM/ATR-mediated phosphorylation at Thr-454 upon DNA damage promotes binding to SIRT1. Phosphorylation at Thr-454 promotes its sumoylation by switching the binding partner of CCAR2 from SENP1 to PIAS3. Acetylation at Lys-112 and Lys-215 by KAT8 prevents inhibitory binding to SIRT1 and increases its deacetylase activity. Post-translationally, genotoxic stress induces its sumoylation and sumoylation promotes the SIRT1-CCAR2 interaction which in turn inhibits SIRT1-mediated deacetylation of p53/TP53. Sumoylation leads to transcriptional activation of p53/TP53 by sequestering SIRT1 from p53/TP53. Desumoylated by SENP1.

It localises to the nucleus. The protein resides in the cytoplasm. Its subcellular location is the cytoskeleton. It is found in the spindle. Its function is as follows. Core component of the DBIRD complex, a multiprotein complex that acts at the interface between core mRNP particles and RNA polymerase II (RNAPII) and integrates transcript elongation with the regulation of alternative splicing: the DBIRD complex affects local transcript elongation rates and alternative splicing of a large set of exons embedded in (A + T)-rich DNA regions. Inhibits SIRT1 deacetylase activity leading to increasing levels of p53/TP53 acetylation and p53-mediated apoptosis. Inhibits SUV39H1 methyltransferase activity. Mediates ligand-dependent transcriptional activation by nuclear hormone receptors. Plays a critical role in maintaining genomic stability and cellular integrity following UV-induced genotoxic stress. Regulates the circadian expression of the core clock components NR1D1 and BMAL1. Enhances the transcriptional repressor activity of NR1D1 through stabilization of NR1D1 protein levels by preventing its ubiquitination and subsequent degradation. Represses the ligand-dependent transcriptional activation function of ESR2. Acts as a regulator of PCK1 expression and gluconeogenesis by a mechanism that involves, at least in part, both NR1D1 and SIRT1. Negatively regulates the deacetylase activity of HDAC3 and can alter its subcellular localization. Positively regulates the beta-catenin pathway (canonical Wnt signaling pathway) and is required for MCC-mediated repression of the beta-catenin pathway. Represses ligand-dependent transcriptional activation function of NR1H2 and NR1H3 and inhibits the interaction of SIRT1 with NR1H3. Plays an important role in tumor suppression through p53/TP53 regulation; stabilizes p53/TP53 by affecting its interaction with ubiquitin ligase MDM2. Represses the transcriptional activator activity of BRCA1. Inhibits SIRT1 in a CHEK2 and PSEM3-dependent manner and inhibits the activity of CHEK2 in vitro. This Pongo abelii (Sumatran orangutan) protein is Cell cycle and apoptosis regulator protein 2 (CCAR2).